A 110-amino-acid polypeptide reads, in one-letter code: Large ribosomal subunit protein uL22 (110 aa).

The protein belongs to the universal ribosomal protein uL22 family. In terms of assembly, part of the 50S ribosomal subunit.

This protein binds specifically to 23S rRNA; its binding is stimulated by other ribosomal proteins, e.g. L4, L17, and L20. It is important during the early stages of 50S assembly. It makes multiple contacts with different domains of the 23S rRNA in the assembled 50S subunit and ribosome. Functionally, the globular domain of the protein is located near the polypeptide exit tunnel on the outside of the subunit, while an extended beta-hairpin is found that lines the wall of the exit tunnel in the center of the 70S ribosome. The protein is Large ribosomal subunit protein uL22 of Delftia acidovorans (strain DSM 14801 / SPH-1).